The chain runs to 120 residues: Flagellar protein FliT (120 aa).

The segment at 1 to 50 (MERHQHLLSEYQQILTLSEQMLMLATVENWNALVDLEMTYLKAVENTANI) is required for homodimerization. The interval 60-98 (LQELLRQKLRSILENEIEIKRLLQRRLDKLSELVGQSTR) is fliD binding.

The protein belongs to the FliT family. As to quaternary structure, homodimer. Interacts with FliD and FlhC.

It localises to the cytoplasm. It is found in the cytosol. Its function is as follows. Dual-function protein that regulates the transcription of class 2 flagellar operons and that also acts as an export chaperone for the filament-capping protein FliD. As a transcriptional regulator, acts as an anti-FlhDC factor; it directly binds FlhC, thus inhibiting the binding of the FlhC/FlhD complex to class 2 promoters, resulting in decreased expression of class 2 flagellar operons. As a chaperone, effects FliD transition to the membrane by preventing its premature polymerization, and by directing it to the export apparatus. The protein is Flagellar protein FliT of Yersinia pestis bv. Antiqua (strain Antiqua).